The following is a 96-amino-acid chain: MNSFSFFLVIFVVLNLQVAKLMAFPASEDLSQDPRDMDQITNTVFDLRALQSALQKSQVNTKSRSKRLENDDDDDFDCDCDEEYDDEYIEEYCDCD.

The N-terminal stretch at 1–23 is a signal peptide; it reads MNSFSFFLVIFVVLNLQVAKLMA.

The protein belongs to the scoloptoxin-06 family. In terms of processing, contains 2 disulfide bonds. In terms of tissue distribution, expressed by the venom gland.

The protein resides in the secreted. This is U-scoloptoxin(06)-Sm1a from Scolopendra morsitans (Tanzanian blue ringleg centipede).